We begin with the raw amino-acid sequence, 194 residues long: Large ribosomal subunit protein bL9 (194 aa).

Residues 167–194 are disordered; the sequence is EDRAAEAEAASDMAAGGAGSFEGDHYES.

The protein belongs to the bacterial ribosomal protein bL9 family.

In terms of biological role, binds to the 23S rRNA. This chain is Large ribosomal subunit protein bL9, found in Caulobacter sp. (strain K31).